A 58-amino-acid polypeptide reads, in one-letter code: UPF0391 membrane protein Maqu_2901 (58 aa).

2 consecutive transmembrane segments (helical) span residues 4-24 and 28-48; these read WAIV…GGIA and AGFA…SLVV.

The protein belongs to the UPF0391 family.

The protein resides in the cell membrane. The polypeptide is UPF0391 membrane protein Maqu_2901 (Marinobacter nauticus (strain ATCC 700491 / DSM 11845 / VT8) (Marinobacter aquaeolei)).